Reading from the N-terminus, the 190-residue chain is Ribosome-recycling factor (190 aa).

It belongs to the RRF family.

The protein resides in the cytoplasm. Its function is as follows. Responsible for the release of ribosomes from messenger RNA at the termination of protein biosynthesis. May increase the efficiency of translation by recycling ribosomes from one round of translation to another. In Fusobacterium nucleatum subsp. nucleatum (strain ATCC 25586 / DSM 15643 / BCRC 10681 / CIP 101130 / JCM 8532 / KCTC 2640 / LMG 13131 / VPI 4355), this protein is Ribosome-recycling factor.